The sequence spans 145 residues: Antiholin-like protein LrgA (145 aa).

A run of 4 helical transmembrane segments spans residues 10–30 (PAHF…SKII), 33–53 (FMPI…VLLC), 72–92 (NIGL…GVIS), and 96–116 (FLII…TGYV).

The protein belongs to the CidA/LrgA family. LrgA subfamily.

It localises to the cell membrane. In terms of biological role, inhibits the expression or activity of extracellular murein hydrolases by interacting, possibly with LrgB, with the holin-like proteins CidA and/or CidB. The LrgAB and CidAB proteins may affect the proton motive force of the membrane. May be involved in programmed cell death (PCD), possibly triggering PCD in response to antibiotics and environmental stresses. The chain is Antiholin-like protein LrgA from Staphylococcus aureus (strain Mu3 / ATCC 700698).